The sequence spans 145 residues: Large-conductance mechanosensitive channel (145 aa).

Transmembrane regions (helical) follow at residues 10–30 (FALKGNVMDLAVGVIIGGAFA), 41–61 (IMPIVAFIAGGEINFKNMFLI), and 87–107 (GNFITVLINFLILAFIIFMMV).

Belongs to the MscL family. As to quaternary structure, homopentamer.

It localises to the cell inner membrane. In terms of biological role, channel that opens in response to stretch forces in the membrane lipid bilayer. May participate in the regulation of osmotic pressure changes within the cell. The sequence is that of Large-conductance mechanosensitive channel from Psychrobacter arcticus (strain DSM 17307 / VKM B-2377 / 273-4).